Here is a 310-residue protein sequence, read N- to C-terminus: Olfactory receptor 4K14 (310 aa).

The Extracellular segment spans residues 1-25 (MDPQNYSLVSEFVLHGLCTSRHLQN). N-linked (GlcNAc...) asparagine glycosylation is present at N5. A helical transmembrane segment spans residues 26-49 (FFFIFFFGVYVAIMLGNLLILVTV). The Cytoplasmic segment spans residues 50 to 58 (ISDPCLHSS). Residues 59 to 80 (PMYFLLGNLAFLDMWLASFATP) traverse the membrane as a helical segment. At 81 to 101 (KMIRDFLSDQKLISFGGCMAQ) the chain is on the extracellular side. A disulfide bond links C98 and C190. The chain crosses the membrane as a helical span at residues 102-121 (IFFLHFTGGAEMVLLVSMAY). Residues 122-140 (DRYVAICKPLHYMTLMSWQ) are Cytoplasmic-facing. The chain crosses the membrane as a helical span at residues 141-159 (TCIRLVLASWVVGFVHSIS). At 160–196 (QVAFTVNLPYCGPNEVDSFFCDLPLVIKLACMDTYVL) the chain is on the extracellular side. The helical transmembrane segment at 197-220 (GIIMISDSGLLSLSCFLLLLISYT) threads the bilayer. Residues 221–236 (VILLAIRQRAAGSTSK) are Cytoplasmic-facing. The chain crosses the membrane as a helical span at residues 237–259 (ALSTCSAHIMVVTLFFGPCIFVY). Topologically, residues 260–270 (VRPFSRFSVDK) are extracellular. Residues 271–290 (LLSVFYTIFTPLLNPIIYTL) traverse the membrane as a helical segment. Over 291–310 (RNEEMKAAMKKLQNRRVTFQ) the chain is Cytoplasmic.

The protein belongs to the G-protein coupled receptor 1 family.

It localises to the cell membrane. Functionally, odorant receptor. This is Olfactory receptor 4K14 (OR4K14) from Homo sapiens (Human).